The sequence spans 521 residues: Vang-like protein 2 (521 aa).

A disordered region spans residues 1–81 (MDTESQYSGY…TTVVTGTSEH (81 aa)). At 1–108 (MDTESQYSGY…VPLDCSRHLG (108 aa)) the chain is on the cytoplasmic side. The segment covering 15-33 (GHSRSSRKHRDRRDRHRSK) has biased composition (basic residues). Residues 57–67 (ESTRGDERDDN) are compositionally biased toward basic and acidic residues. The segment covering 69–81 (GETTTVVTGTSEH) has biased composition (low complexity). Residues 109 to 129 (VAAGATLALLSFLTPLAFLLL) form a helical membrane-spanning segment. Over 130-147 (PPLLWREELEPCGTACEG) the chain is Extracellular. The chain crosses the membrane as a helical span at residues 148 to 168 (LFISVAFKLLILLLGSWALFF). Residues 169–178 (RRPKASLPRV) are Cytoplasmic-facing. The chain crosses the membrane as a helical span at residues 179 to 199 (FVLRALLMVLVFLLVVSYWLF). Over 200-217 (YGVRILDARERSYQGVVQ) the chain is Extracellular. A helical transmembrane segment spans residues 218–238 (FAVSLVDALLFVHYLAVVLLE). Topologically, residues 239-521 (LRQLQPQFTL…VMRLQSETSV (283 aa)) are cytoplasmic.

This sequence belongs to the Vang family. As to quaternary structure, homodimer and heterodimer with VANGL1. Interacts through its C-terminal region with the N-terminal half of DVL1, DVL2 and DVL3. The PDZ domain of DVL1, DVL2 and DVL3 is required for the interaction. Also interacts with the PDZ domains of MAGI3, SCRIB/SCRB1 and FZD3. Interacts with PRICKLE3.

The protein resides in the cell membrane. Its function is as follows. Involved in the control of early morphogenesis and patterning of both axial midline structures and the development of neural plate. Plays a role in the regulation of planar cell polarity, particularly in the orientation of stereociliary bundles in the cochlea. Required for polarization and movement of myocardializing cells in the outflow tract and seems to act via RHOA signaling to regulate this process. Required for cell surface localization of FZD3 and FZD6 in the inner ear. The protein is Vang-like protein 2 (VANGL2) of Homo sapiens (Human).